The sequence spans 252 residues: GTP cyclohydrolase 1 type 2 homolog (252 aa).

A divalent metal cation contacts are provided by H63, H64, D101, H220, and E224.

Belongs to the GTP cyclohydrolase I type 2/NIF3 family. In terms of assembly, homohexamer.

This is GTP cyclohydrolase 1 type 2 homolog from Vibrio cholerae serotype O1 (strain ATCC 39315 / El Tor Inaba N16961).